A 229-amino-acid polypeptide reads, in one-letter code: 2,3-bisphosphoglycerate-dependent phosphoglycerate mutase (229 aa).

Residues 7–14, 20–21, Arg-59, 86–89, Lys-97, 113–114, and 182–183 each bind substrate; these read RHGQSEWN, TG, ERHY, RR, and GN. His-8 acts as the Tele-phosphohistidine intermediate in catalysis. The active-site Proton donor/acceptor is Glu-86.

Belongs to the phosphoglycerate mutase family. BPG-dependent PGAM subfamily.

It carries out the reaction (2R)-2-phosphoglycerate = (2R)-3-phosphoglycerate. The protein operates within carbohydrate degradation; glycolysis; pyruvate from D-glyceraldehyde 3-phosphate: step 3/5. Its function is as follows. Catalyzes the interconversion of 2-phosphoglycerate and 3-phosphoglycerate. This chain is 2,3-bisphosphoglycerate-dependent phosphoglycerate mutase, found in Listeria monocytogenes serotype 4b (strain F2365).